We begin with the raw amino-acid sequence, 229 residues long: PKHD-type hydroxylase Nham_1514 (229 aa).

Residues 78–180 form the Fe2OG dioxygenase domain; that stretch reads QIFPPLFNRY…RVASFFWLQS (103 aa). Fe cation contacts are provided by His98, Asp100, and His161. 2-oxoglutarate is bound at residue Arg171.

It depends on Fe(2+) as a cofactor. Requires L-ascorbate as cofactor.

The sequence is that of PKHD-type hydroxylase Nham_1514 from Nitrobacter hamburgensis (strain DSM 10229 / NCIMB 13809 / X14).